The primary structure comprises 68 residues: Protein transport protein Sec61 subunit gamma (68 aa).

Residues 1-32 lie on the Cytoplasmic side of the membrane; sequence MDQFQALIEPARQFSKDSYRLVKRCTKPDRKE. The helical transmembrane segment at 33-61 threads the bilayer; the sequence is YQKIAMATAIGFAIMGFIGFFVKLIHIPI. Over 62–68 the chain is Extracellular; sequence NNIIVGA.

This sequence belongs to the SecE/SEC61-gamma family. Heterotrimeric complex composed of SEC61-alpha, SEC61-beta and SEC61-gamma. As to expression, expressed in the germline. Expression in the germline is regulated in a sex- and meiotic cycle stage-specific manner. Expressed in somatic tissues including the intestine and somatic gonad. Expressed in the intestine more highly in hermaprodites than in males. In hermaphrodites, weakly expressed in the spermatheca.

It localises to the endoplasmic reticulum membrane. Functionally, required for oocyte development and ovulation. Required for the translocation of secretory and transmembrane proteins into the endoplasmic reticulum in vitro. The polypeptide is Protein transport protein Sec61 subunit gamma (Caenorhabditis elegans).